Consider the following 388-residue polypeptide: Succinate--CoA ligase [ADP-forming] subunit beta (388 aa).

An ATP-grasp domain is found at 9 to 245 (KELLASYGLP…KSQENERELK (237 aa)). ATP is bound by residues K46, 53 to 55 (GRG), E100, Y103, and E108. Residues N200 and D214 each coordinate Mg(2+). Residues N265 and 322–324 (GIV) each bind substrate.

This sequence belongs to the succinate/malate CoA ligase beta subunit family. In terms of assembly, heterotetramer of two alpha and two beta subunits. Mg(2+) is required as a cofactor.

It carries out the reaction succinate + ATP + CoA = succinyl-CoA + ADP + phosphate. The enzyme catalyses GTP + succinate + CoA = succinyl-CoA + GDP + phosphate. The protein operates within carbohydrate metabolism; tricarboxylic acid cycle; succinate from succinyl-CoA (ligase route): step 1/1. Succinyl-CoA synthetase functions in the citric acid cycle (TCA), coupling the hydrolysis of succinyl-CoA to the synthesis of either ATP or GTP and thus represents the only step of substrate-level phosphorylation in the TCA. The beta subunit provides nucleotide specificity of the enzyme and binds the substrate succinate, while the binding sites for coenzyme A and phosphate are found in the alpha subunit. This Neisseria gonorrhoeae (strain NCCP11945) protein is Succinate--CoA ligase [ADP-forming] subunit beta.